The following is a 432-amino-acid chain: Adenylosuccinate synthetase (432 aa).

GTP contacts are provided by residues 13-19 and 41-43; these read GDEGKGK and GHT. Asp-14 acts as the Proton acceptor in catalysis. 2 residues coordinate Mg(2+): Asp-14 and Gly-41. IMP-binding positions include 14–17, 39–42, Thr-130, Arg-144, Gln-225, Thr-240, and Arg-304; these read DEGK and NAGH. The active-site Proton donor is His-42. 300-306 lines the substrate pocket; it reads ATTGRRR. Residues Arg-306, 332–334, and 415–417 contribute to the GTP site; these read KLD and STG.

The protein belongs to the adenylosuccinate synthetase family. Homodimer. It depends on Mg(2+) as a cofactor.

Its subcellular location is the cytoplasm. It carries out the reaction IMP + L-aspartate + GTP = N(6)-(1,2-dicarboxyethyl)-AMP + GDP + phosphate + 2 H(+). It functions in the pathway purine metabolism; AMP biosynthesis via de novo pathway; AMP from IMP: step 1/2. Its function is as follows. Plays an important role in the de novo pathway of purine nucleotide biosynthesis. Catalyzes the first committed step in the biosynthesis of AMP from IMP. This is Adenylosuccinate synthetase from Salmonella agona (strain SL483).